Reading from the N-terminus, the 719-residue chain is Polyribonucleotide nucleotidyltransferase (719 aa).

Positions 495 and 501 each coordinate Mg(2+). The 60-residue stretch at 562–621 (PRRLSFRIDPELIGTVIGPGGRTIKGITERTNTKIDIEDTGIVTVASHDGAAAEEAQKII) folds into the KH domain. In terms of domain architecture, S1 motif spans 631 to 699 (GEYFDGKVTR…NRGRINLTLR (69 aa)). The segment at 699 to 719 (RGVPQDGSDPQPTVILPIGES) is disordered.

This sequence belongs to the polyribonucleotide nucleotidyltransferase family. It depends on Mg(2+) as a cofactor.

The protein resides in the cytoplasm. It catalyses the reaction RNA(n+1) + phosphate = RNA(n) + a ribonucleoside 5'-diphosphate. In terms of biological role, involved in mRNA degradation. Catalyzes the phosphorolysis of single-stranded polyribonucleotides processively in the 3'- to 5'-direction. In Synechococcus sp. (strain RCC307), this protein is Polyribonucleotide nucleotidyltransferase.